A 370-amino-acid polypeptide reads, in one-letter code: Queuine tRNA-ribosyltransferase (370 aa).

Asp93 acts as the Proton acceptor in catalysis. Residues 93-97 (DSGGF), Asp147, Gln189, and Gly216 contribute to the substrate site. The RNA binding stretch occupies residues 247–253 (GVGSPDC). Asp266 (nucleophile) is an active-site residue. An RNA binding; important for wobble base 34 recognition region spans residues 271-275 (TRIAR). 4 residues coordinate Zn(2+): Cys304, Cys306, Cys309, and His335.

This sequence belongs to the queuine tRNA-ribosyltransferase family. Homodimer. Within each dimer, one monomer is responsible for RNA recognition and catalysis, while the other monomer binds to the replacement base PreQ1. Requires Zn(2+) as cofactor.

The catalysed reaction is 7-aminomethyl-7-carbaguanine + guanosine(34) in tRNA = 7-aminomethyl-7-carbaguanosine(34) in tRNA + guanine. Its pathway is tRNA modification; tRNA-queuosine biosynthesis. Catalyzes the base-exchange of a guanine (G) residue with the queuine precursor 7-aminomethyl-7-deazaguanine (PreQ1) at position 34 (anticodon wobble position) in tRNAs with GU(N) anticodons (tRNA-Asp, -Asn, -His and -Tyr). Catalysis occurs through a double-displacement mechanism. The nucleophile active site attacks the C1' of nucleotide 34 to detach the guanine base from the RNA, forming a covalent enzyme-RNA intermediate. The proton acceptor active site deprotonates the incoming PreQ1, allowing a nucleophilic attack on the C1' of the ribose to form the product. After dissociation, two additional enzymatic reactions on the tRNA convert PreQ1 to queuine (Q), resulting in the hypermodified nucleoside queuosine (7-(((4,5-cis-dihydroxy-2-cyclopenten-1-yl)amino)methyl)-7-deazaguanosine). In Pelotomaculum thermopropionicum (strain DSM 13744 / JCM 10971 / SI), this protein is Queuine tRNA-ribosyltransferase.